The primary structure comprises 1289 residues: MAILNELYPSVPYNVLAYTPPSFLPDAGTQATPADLTAYEQLLKNLEKGINAGTYSKAIADVLKGIFIDDTINYQTYVNIGLSLITLAVPEIGIFTPFIGLFFAALNKHDAPPPPNAKDIFEAMKPAIQEMIDRTLTADEQTFLNGEISGLQNLAARYQSTMDDIQSHGGFNKVDSGLIKKFTDEVLSLNSFYTDRLPVFITDNTADRTLLGLPYYAILASMHLMLLRDIITKGPTWDSKINFTPDAIDSFKTDIKNNIKLYSKTIYDVFQKGLASYGTPSDLESFAKKQKYIEIMTTHCLDFARLFPTFDPDLYPTGSGDISLQKTRRILSPFIPIRTADGLTLNNTSIDTSNWPNYENGNGAFPNPKERILKQFKLYPSWRAAQYGGLLQPYLWAIEVQDSVETRLYGQLPAVDPQAGPNYVSIDSSNPIIQINMDTWKTPPQGASGWNTNLMRGSVSGLSFLQRDGTRLSAGMGGGFADTIYSLPATHYLSYLYGTPYQTSDNYSGHVGALVGVSTPQEATLPNIIGQPDEQGNVSTMGFPFEKASYGGTVVKEWLNGANAMKLSPGQSIGIPITNVTSGEYQIRCRYASNDNTNVFFNVDTGGANPIFQQINFASTVDNNTGVQGANGVYVVKSIATTDNSFTVKIPAKTINVHLTNQGSSDVFLDRIEFVPILESNTVTIFNNSYTTGSANLIPAIAPLWSTSSDKALTGSMSITGRTTPNSDDALLRFFKTNYDTQTIPIPGSGKDFTNTLEIQDIVSIDIFVGSGLHGSDGSIKLDFTNNNSGSGGSPKSFTEQNDLENITTQVNALFTSNTQDALATDVSDHDIEEVVLKVDALSDEVFGKEKKTLRKFVNQAKRLSKARNLLVGGNFDNLDAWYRGRNVVNVSNHELLKSDHVLLPPPGLSPSYIFQKVEESKLKRNTRYTVSGFIAHATDLEIVVSRYGQEIKKVVQVPYGEAFPLTSSGPVCCIPHSTSNGTLGNPHFFSYSIDVGALDVDTNPGIEFGLRIVNPTGMARVSNLEIREDRPLAANEIRQVQRVARNWRTEYEKERAEVTSLIQPVINRINGLYDNGNWNGSIRSDISYQNIDAIVLPTLPKLRHWFMSDRFSEQGDIMAKFQGALNRAYAQLEQNTLLHNGHFTKDAANWTVEGDAHQVVLEDGKRVLRLPDWSSSVSQTIEIENFDPDKEYQLVFHGQGEGTVTLEHGEETKYIETHTHHFANFTTSQRQGLTFESNKVTVTISSEDGEFLVDNIALVEAPLPTDDQNSEGNTASSTNSDTSMNNNQ.

The interval 1263 to 1289 (PLPTDDQNSEGNTASSTNSDTSMNNNQ) is disordered. A compositionally biased stretch (low complexity) spans 1274–1289 (NTASSTNSDTSMNNNQ).

Belongs to the delta endotoxin family.

Endotoxin with nematicidal activity. This Bacillus thuringiensis subsp. darmstadiensis protein is Pesticidal crystal protein Cry5Ab (cry5Ab).